The sequence spans 255 residues: Small ribosomal subunit protein eS1 (255 aa).

A compositionally biased stretch (basic residues) spans Met-1 to Lys-18. The segment at Met-1 to Asp-28 is disordered. Ala-2 is subject to N-acetylalanine; partial. The segment covering Arg-19–Asp-28 has biased composition (basic and acidic residues).

This sequence belongs to the eukaryotic ribosomal protein eS1 family. Component of the small ribosomal subunit. Mature ribosomes consist of a small (40S) and a large (60S) subunit. The 40S subunit contains about 33 different proteins and 1 molecule of RNA (18S). The 60S subunit contains about 49 different proteins and 3 molecules of RNA (25S, 5.8S and 5S).

Its subcellular location is the cytoplasm. This chain is Small ribosomal subunit protein eS1, found in Ajellomyces dermatitidis (strain ER-3 / ATCC MYA-2586) (Blastomyces dermatitidis).